The following is a 677-amino-acid chain: Galactocerebrosidase (677 aa).

An N-terminal signal peptide occupies residues 1–33; it reads MGTVPAGSRRAPGCGEGMFILCLALLLAPGAPA. The substrate site is built by T101, W143, and N189. Catalysis depends on E190, which acts as the Proton donor/acceptor. Catalysis depends on E265, which acts as the Nucleophile. C278 and C385 are oxidised to a cystine. N291, N370, and N381 each carry an N-linked (GlcNAc...) asparagine glycan. R387 contacts substrate. Residues N394, N399, N424, N441, N509, N549, and N630 are each glycosylated (N-linked (GlcNAc...) asparagine).

It belongs to the glycosyl hydrolase 59 family.

It localises to the lysosome. It carries out the reaction a beta-D-galactosyl-(1&lt;-&gt;1')-N-acylsphing-4-enine + H2O = an N-acylsphing-4-enine + D-galactose. The catalysed reaction is beta-D-galactosyl-(1&lt;-&gt;1)-sphing-4-enine + H2O = sphing-4-enine + D-galactose. It catalyses the reaction a D-galactosylceramide + H2O = an N-acyl-sphingoid base + D-galactose. Its function is as follows. Hydrolyzes the galactose ester bonds of glycolipids such as galactosylceramide and galactosylsphingosine. The protein is Galactocerebrosidase of Xenopus laevis (African clawed frog).